Here is a 309-residue protein sequence, read N- to C-terminus: Taste receptor type 2 member 46 (309 aa).

Residue Met1 is a topological domain, extracellular. The helical transmembrane segment at 2-22 (ITFLPIIFSILIVVTFVIGNF) threads the bilayer. At 23 to 46 (ANGFIALANSIEWFKRQKISFADQ) the chain is on the cytoplasmic side. Residues 47 to 67 (ILTALAVSRVGLLWVLLLNWY) traverse the membrane as a helical segment. The Extracellular segment spans residues 68-86 (ATELNPAFYSIEVRITAYN). The chain crosses the membrane as a helical span at residues 87 to 107 (LWAVINHFSNWLATSLSIFYL). Topologically, residues 108-126 (LKIANFSNLIFLRLKRRVK) are cytoplasmic. Residues 127–147 (SVVLVILLGPLLFLVCHLFVI) form a helical membrane-spanning segment. Residues 148–178 (NMNQIIWTKEYEGNMTWKIKLRSAMYLSNIT) are Extracellular-facing. N-linked (GlcNAc...) asparagine glycosylation is found at Asn161 and Asn176. Residues 179 to 199 (VTILANLVPFTLTLISFLLLI) form a helical membrane-spanning segment. At 200–229 (CSLCKHLKKMQLHGKGSQDPSMKVHIKALQ) the chain is on the cytoplasmic side. The helical transmembrane segment at 230–250 (TVTSFLLLCAIYFLSIIMSVW) threads the bilayer. Over 251–259 (SFESLENKP) the chain is Extracellular. Residues 260–280 (VFMFCEAITFSYPSTHPFILI) form a helical membrane-spanning segment. Residues 281 to 309 (WGNKKLKQTFLSVLWHVRYWVKGEEPSSP) lie on the Cytoplasmic side of the membrane.

This sequence belongs to the G-protein coupled receptor T2R family.

It is found in the membrane. Its subcellular location is the cell projection. The protein resides in the cilium membrane. Its function is as follows. Receptor that may play a role in the perception of bitterness and is gustducin-linked. May play a role in sensing the chemical composition of the gastrointestinal content. The activity of this receptor may stimulate alpha gustducin, mediate PLC-beta-2 activation and lead to the gating of TRPM5. In airway epithelial cells, binding of bitter compounds increases the intracellular calcium ion concentration and stimulates ciliary beat frequency. This is Taste receptor type 2 member 46 (TAS2R46) from Pan paniscus (Pygmy chimpanzee).